Reading from the N-terminus, the 25-residue chain is Acyl carrier protein (25 aa).

The Carrier domain maps to 2–25; the sequence is ESIEQRVKKIVAEQLGVAEAEIKA.

It belongs to the acyl carrier protein (ACP) family. Post-translationally, 4'-phosphopantetheine is transferred from CoA to a specific serine of apo-ACP by AcpS. This modification is essential for activity because fatty acids are bound in thioester linkage to the sulfhydryl of the prosthetic group.

Its subcellular location is the cytoplasm. It participates in lipid metabolism; fatty acid biosynthesis. Its function is as follows. Carrier of the growing fatty acid chain in fatty acid biosynthesis. The sequence is that of Acyl carrier protein (acpP) from Alcaligenes faecalis.